The chain runs to 361 residues: Phosphoserine aminotransferase (361 aa).

R43 is a binding site for L-glutamate. Residues 77-78 (AS), W103, T153, D172, and Q195 each bind pyridoxal 5'-phosphate. K196 is subject to N6-(pyridoxal phosphate)lysine. 237–238 (NT) serves as a coordination point for pyridoxal 5'-phosphate.

The protein belongs to the class-V pyridoxal-phosphate-dependent aminotransferase family. SerC subfamily. As to quaternary structure, homodimer. Pyridoxal 5'-phosphate is required as a cofactor.

The protein localises to the cytoplasm. It carries out the reaction O-phospho-L-serine + 2-oxoglutarate = 3-phosphooxypyruvate + L-glutamate. The enzyme catalyses 4-(phosphooxy)-L-threonine + 2-oxoglutarate = (R)-3-hydroxy-2-oxo-4-phosphooxybutanoate + L-glutamate. It participates in amino-acid biosynthesis; L-serine biosynthesis; L-serine from 3-phospho-D-glycerate: step 2/3. Its pathway is cofactor biosynthesis; pyridoxine 5'-phosphate biosynthesis; pyridoxine 5'-phosphate from D-erythrose 4-phosphate: step 3/5. In terms of biological role, catalyzes the reversible conversion of 3-phosphohydroxypyruvate to phosphoserine and of 3-hydroxy-2-oxo-4-phosphonooxybutanoate to phosphohydroxythreonine. The chain is Phosphoserine aminotransferase from Desulfotalea psychrophila (strain LSv54 / DSM 12343).